The following is a 558-amino-acid chain: N-acetylglucosamine-6-O-sulfatase (558 aa).

Position 101 is a 3-oxoalanine (Ser) (Ser-101).

The protein belongs to the sulfatase family. Post-translationally, the conversion to 3-oxoalanine (also known as C-formylglycine, FGly), of a serine or cysteine residue in prokaryotes and of a cysteine residue in eukaryotes, is critical for catalytic activity.

Functionally, exosulfatase involved in the degradation of the glycosaminoglycan (GAG) heparan sulfate (HS). Catalyzes the hydrolysis of the 6-sulfate groups of the N-acetyl-D-glucosamine 6-sulfate units. GAG-specific sulfatases play a key role in the persistence of the major human gut symbiont B.thetaiotaomicron in the host gastrointestinal tract. This is N-acetylglucosamine-6-O-sulfatase from Bacteroides thetaiotaomicron (strain ATCC 29148 / DSM 2079 / JCM 5827 / CCUG 10774 / NCTC 10582 / VPI-5482 / E50).